Reading from the N-terminus, the 1147-residue chain is Lon protease homolog 2, peroxisomal (1147 aa).

Residues 20 to 348 (LPTYKLDSNL…EVNRMLESMI (329 aa)) enclose the Lon N-terminal domain. Disordered regions lie at residues 395–444 (KPDK…DDDD) and 561–626 (KIES…SLTT). The segment covering 427–444 (DGNESNDEYDDDEDDDDD) has biased composition (acidic residues). 2 stretches are compositionally biased toward basic and acidic residues: residues 561-574 (KIESENSKKSKKNE) and 582-597 (KNDKQRSEKTFTRSDD). 651–658 (GPPGTGKT) contributes to the ATP binding site. In terms of domain architecture, Lon proteolytic spans 903 to 1131 (SAKCGVVNGL…WDVIKAVWGD (229 aa)). Catalysis depends on residues Ser1006 and Lys1049.

It belongs to the peptidase S16 family.

Its subcellular location is the peroxisome matrix. It carries out the reaction Hydrolysis of proteins in presence of ATP.. ATP-dependent serine protease that mediates the selective degradation of misfolded and unassembled polypeptides in the peroxisomal matrix. Necessary for type 2 peroxisome targeting signal (PTS2)-containing protein processing and facilitates peroxisome matrix protein import. The chain is Lon protease homolog 2, peroxisomal from Debaryomyces hansenii (strain ATCC 36239 / CBS 767 / BCRC 21394 / JCM 1990 / NBRC 0083 / IGC 2968) (Yeast).